Consider the following 286-residue polypeptide: Shikimate dehydrogenase (NADP(+)) (286 aa).

Shikimate is bound by residues 20-22 (SLS) and S67. The active-site Proton acceptor is the K71. Residues N92 and D107 each contribute to the shikimate site. Residues 131–135 (GGGGA) and A230 contribute to the NADP(+) site. Y232 provides a ligand contact to shikimate. G253 is a binding site for NADP(+).

This sequence belongs to the shikimate dehydrogenase family. In terms of assembly, homodimer.

It catalyses the reaction shikimate + NADP(+) = 3-dehydroshikimate + NADPH + H(+). It functions in the pathway metabolic intermediate biosynthesis; chorismate biosynthesis; chorismate from D-erythrose 4-phosphate and phosphoenolpyruvate: step 4/7. Its function is as follows. Involved in the biosynthesis of the chorismate, which leads to the biosynthesis of aromatic amino acids. Catalyzes the reversible NADPH linked reduction of 3-dehydroshikimate (DHSA) to yield shikimate (SA). This chain is Shikimate dehydrogenase (NADP(+)), found in Lactococcus lactis subsp. cremoris (strain SK11).